Here is a 301-residue protein sequence, read N- to C-terminus: Glycine--tRNA ligase alpha subunit (301 aa).

Belongs to the class-II aminoacyl-tRNA synthetase family. In terms of assembly, tetramer of two alpha and two beta subunits.

It localises to the cytoplasm. It catalyses the reaction tRNA(Gly) + glycine + ATP = glycyl-tRNA(Gly) + AMP + diphosphate. The polypeptide is Glycine--tRNA ligase alpha subunit (Alteromonas mediterranea (strain DSM 17117 / CIP 110805 / LMG 28347 / Deep ecotype)).